A 259-amino-acid polypeptide reads, in one-letter code: MKYKIFASTTPQTEPVLNKLRAVLKTWQAVENGYEYVFVLGGDGFFVSTLANYNCDSCKVVGINTGHIGFYTSFNGDDLDENFISKLTSFEFKKINLLEVKTKNHSFLVLNELAVYTNTAYPINIFIDDNHWESYRGSGLLIGPRTGSTALAKSAKGAVIFPNVDVVQIIELNPLLHPNQITIQSPIILPMQTKVEFRIKKAFKAEQFPNFYADGIKLDLKNEDTSISFQLVLSRSMFHASLKTKDFIDKLKSTFIKQS.

D43 acts as the Proton acceptor in catalysis. NAD(+)-binding positions include 43–44 (DG), 111–112 (NE), and R136.

Belongs to the NAD kinase family. A divalent metal cation is required as a cofactor.

The protein resides in the cytoplasm. It carries out the reaction NAD(+) + ATP = ADP + NADP(+) + H(+). Involved in the regulation of the intracellular balance of NAD and NADP, and is a key enzyme in the biosynthesis of NADP. Catalyzes specifically the phosphorylation on 2'-hydroxyl of the adenosine moiety of NAD to yield NADP. The protein is NAD kinase of Mycoplasma genitalium (strain ATCC 33530 / DSM 19775 / NCTC 10195 / G37) (Mycoplasmoides genitalium).